We begin with the raw amino-acid sequence, 822 residues long: Cadherin-3 (822 aa).

A signal peptide spans 1 to 25 (MELLSGPHAFLLLLLQVCWLRSVVS). Residues 26-99 (EPYRAGFIGE…PTRILRRRKR (74 aa)) constitute a propeptide that is removed on maturation. Cadherin domains follow at residues 100-207 (EWVM…KPKF), 208-320 (TQDT…APEF), 321-432 (EPQK…APVF), 433-538 (VPPS…DHGP), and 539-645 (IPEP…RPWK). Over 100–647 (EWVMPPIFVP…NDCPRPWKGG (548 aa)) the chain is Extracellular. The N-linked (GlcNAc...) asparagine glycan is linked to Asn192. Asn558 is a glycosylation site (N-linked (GlcNAc...) asparagine). A helical membrane pass occupies residues 648–670 (FILPILGAVLALLTLLLALLLLV). Residues 671–822 (RKKRKVKEPL…ADMYGGGEDD (152 aa)) lie on the Cytoplasmic side of the membrane.

In terms of assembly, interacts with CDCP1 and CTNNB1.

Its subcellular location is the cell membrane. Cadherins are calcium-dependent cell adhesion proteins. They preferentially interact with themselves in a homophilic manner in connecting cells; cadherins may thus contribute to the sorting of heterogeneous cell types. The chain is Cadherin-3 (Cdh3) from Mus musculus (Mouse).